A 433-amino-acid chain; its full sequence is Alpha-(1,3)-fucosyltransferase fut-1 (433 aa).

Residues 1–12 (MTARSIKLFFAR) are Cytoplasmic-facing. The helical; Signal-anchor for type II membrane protein transmembrane segment at 13–32 (WKYLMFACCITYLLVIYAPI) threads the bilayer. Over 33-433 (SKSEQKDWKE…GTLVDSIPLD (401 aa)) the chain is Lumenal. N-linked (GlcNAc...) asparagine glycans are attached at residues Asn-194 and Asn-359.

Belongs to the glycosyltransferase 10 family. It depends on Mg(2+) as a cofactor. The cofactor is Mn(2+). N-glycosylated. Glycosylation is important for enzymatic activity. As to expression, expressed in the pharyngeal-intestinal (PI) and anal valves. Expressed in ASG neurons and in one or two neurons in the retrovesicular ganglion and two neurons posterior to the PI valve and PHA and PHB neurons in the tail.

It is found in the golgi apparatus. The protein resides in the golgi stack membrane. The enzyme catalyses N(4)-{beta-D-GlcNAc-(1-&gt;2)-alpha-D-Man-(1-&gt;3)-[beta-D-GlcNAc-(1-&gt;2)-alpha-D-Man-(1-&gt;6)]-beta-D-Man-(1-&gt;4)-beta-D-GlcNAc-(1-&gt;4)-beta-D-GlcNAc}-L-asparaginyl-[protein] + GDP-beta-L-fucose = N(4)-{beta-D-GlcNAc-(1-&gt;2)-alpha-D-Man-(1-&gt;3)-[beta-D-GlcNAc-(1-&gt;2)-alpha-D-Man-(1-&gt;6)]-beta-D-Man-(1-&gt;4)-beta-D-GlcNAc-(1-&gt;4)-[alpha-L-Fuc(1-&gt;3)]-beta-D-GlcNAc}-L-asparaginyl-[protein] + GDP + H(+). The protein operates within protein modification; protein glycosylation. Its activity is regulated as follows. Inhibited by Cu(2+) or Zn(2+) and to a lesser extent Ni(2+) ions. Preferentially catalyzes the addition of fucose in alpha 1-3 linkage to the first GlcNAc residue (with or without alpha 1,6-linked fucose), next to the peptide chains in N-glycans. Unlike in mammals, does not require the prior action of N-acetylglucosaminyltransferase I to generate complex N-glycans. The chain is Alpha-(1,3)-fucosyltransferase fut-1 from Caenorhabditis elegans.